Consider the following 259-residue polypeptide: Ribonuclease HII (259 aa).

Positions 72–259 (SYIAGIDEVG…PIKDMIKNKL (188 aa)) constitute an RNase H type-2 domain. Residues D78, E79, and D170 each coordinate a divalent metal cation.

The protein belongs to the RNase HII family. Requires Mn(2+) as cofactor. It depends on Mg(2+) as a cofactor.

It localises to the cytoplasm. The catalysed reaction is Endonucleolytic cleavage to 5'-phosphomonoester.. Functionally, endonuclease that specifically degrades the RNA of RNA-DNA hybrids. The sequence is that of Ribonuclease HII from Bacillus cytotoxicus (strain DSM 22905 / CIP 110041 / 391-98 / NVH 391-98).